The chain runs to 161 residues: Nucleotide-binding protein amb3630 (161 aa).

This sequence belongs to the YajQ family.

Functionally, nucleotide-binding protein. This Paramagnetospirillum magneticum (strain ATCC 700264 / AMB-1) (Magnetospirillum magneticum) protein is Nucleotide-binding protein amb3630.